The following is a 252-amino-acid chain: 3-dehydroquinate dehydratase (252 aa).

3-dehydroquinate-binding positions include Ser-21, 46-48 (EWR), and Arg-82. The active-site Proton donor/acceptor is His-143. Residue Lys-170 is the Schiff-base intermediate with substrate of the active site. Arg-213, Ser-232, and Gln-236 together coordinate 3-dehydroquinate.

This sequence belongs to the type-I 3-dehydroquinase family. Homodimer.

It carries out the reaction 3-dehydroquinate = 3-dehydroshikimate + H2O. It functions in the pathway metabolic intermediate biosynthesis; chorismate biosynthesis; chorismate from D-erythrose 4-phosphate and phosphoenolpyruvate: step 3/7. With respect to regulation, inhibited by (2R)-2-methyl-3-dehydroquinic acid. Functionally, involved in the third step of the chorismate pathway, which leads to the biosynthesis of aromatic amino acids. Catalyzes the cis-dehydration of 3-dehydroquinate (DHQ) and introduces the first double bond of the aromatic ring to yield 3-dehydroshikimate. The reaction involves the formation of an imine intermediate between the keto group of 3-dehydroquinate and the epsilon-amino group of a Lys-170 at the active site. In Salmonella typhimurium (strain LT2 / SGSC1412 / ATCC 700720), this protein is 3-dehydroquinate dehydratase.